A 294-amino-acid chain; its full sequence is 2-oxoglutaramate amidase (294 aa).

A CN hydrolase domain is found at 16–261 (LDVAAVQVKF…EAVLRATLNF (246 aa)). Residue glutamate 55 is the Proton acceptor of the active site. Lysine 129 (proton donor) is an active-site residue. Residue cysteine 168 is the Nucleophile of the active site.

This sequence belongs to the carbon-nitrogen hydrolase superfamily. NIT1/NIT2 family.

It catalyses the reaction 2-oxoglutaramate + H2O = 2-oxoglutarate + NH4(+). It participates in alkaloid degradation; nicotine degradation. In terms of biological role, catalyzes the conversion of 2-oxoglutaramate to 2-oxoglutarate. Together with glutamate dehydrogenase, may form a physiologically relevant enzyme couple, leading to transformation of metabolically inert 2-oxoglutaramate derived from trihydroxypyridine into glutamate, a central compound of nitrogen metabolism. The chain is 2-oxoglutaramate amidase from Paenarthrobacter nicotinovorans (Arthrobacter nicotinovorans).